Reading from the N-terminus, the 332-residue chain is Probable L-asparaginase (332 aa).

In terms of domain architecture, Asparaginase/glutaminase spans P6–Y332. Catalysis depends on T16, which acts as the O-isoaspartyl threonine intermediate. Substrate is bound by residues S62 and T95 to D96.

This sequence belongs to the asparaginase 1 family.

The protein localises to the cytoplasm. The catalysed reaction is L-asparagine + H2O = L-aspartate + NH4(+). This is Probable L-asparaginase (ansA) from Helicobacter pylori (strain J99 / ATCC 700824) (Campylobacter pylori J99).